We begin with the raw amino-acid sequence, 62 residues long: Photosystem II reaction center protein Z (62 aa).

Transmembrane regions (helical) follow at residues 8 to 28 (AVFA…VVFA) and 41 to 61 (FSGT…NSLI).

This sequence belongs to the PsbZ family. As to quaternary structure, PSII is composed of 1 copy each of membrane proteins PsbA, PsbB, PsbC, PsbD, PsbE, PsbF, PsbH, PsbI, PsbJ, PsbK, PsbL, PsbM, PsbT, PsbY, PsbZ, Psb30/Ycf12, at least 3 peripheral proteins of the oxygen-evolving complex and a large number of cofactors. It forms dimeric complexes.

It localises to the plastid. The protein resides in the chloroplast thylakoid membrane. Functionally, may control the interaction of photosystem II (PSII) cores with the light-harvesting antenna, regulates electron flow through the 2 photosystem reaction centers. PSII is a light-driven water plastoquinone oxidoreductase, using light energy to abstract electrons from H(2)O, generating a proton gradient subsequently used for ATP formation. The sequence is that of Photosystem II reaction center protein Z from Nymphaea alba (White water-lily).